The chain runs to 157 residues: 2-C-methyl-D-erythritol 2,4-cyclodiphosphate synthase (157 aa).

Asp-8 and His-10 together coordinate a divalent metal cation. 4-CDP-2-C-methyl-D-erythritol 2-phosphate contacts are provided by residues 8–10 (DVH) and 34–35 (HS). Residue His-42 participates in a divalent metal cation binding. 4-CDP-2-C-methyl-D-erythritol 2-phosphate contacts are provided by residues 56 to 58 (DIG), 132 to 135 (TTNE), and Arg-142.

It belongs to the IspF family. As to quaternary structure, homotrimer. A divalent metal cation is required as a cofactor.

It catalyses the reaction 4-CDP-2-C-methyl-D-erythritol 2-phosphate = 2-C-methyl-D-erythritol 2,4-cyclic diphosphate + CMP. Its pathway is isoprenoid biosynthesis; isopentenyl diphosphate biosynthesis via DXP pathway; isopentenyl diphosphate from 1-deoxy-D-xylulose 5-phosphate: step 4/6. Its function is as follows. Involved in the biosynthesis of isopentenyl diphosphate (IPP) and dimethylallyl diphosphate (DMAPP), two major building blocks of isoprenoid compounds. Catalyzes the conversion of 4-diphosphocytidyl-2-C-methyl-D-erythritol 2-phosphate (CDP-ME2P) to 2-C-methyl-D-erythritol 2,4-cyclodiphosphate (ME-CPP) with a corresponding release of cytidine 5-monophosphate (CMP). The protein is 2-C-methyl-D-erythritol 2,4-cyclodiphosphate synthase of Chlorobium phaeovibrioides (strain DSM 265 / 1930) (Prosthecochloris vibrioformis (strain DSM 265)).